Reading from the N-terminus, the 957-residue chain is MPPQIPNENDDLFTRWLKSRAIIQRAVSTRECFDSEVFLASGGWNITNEIITLKKYYQLKWPNSSCNSFHPKTVEFIKERLHNLEEHDSSWKIPNPAYSFKKAFLEDTKSAFSNLEPVWGPSRLLNPAELLLPQDEKLLVQEIPLEFAPFQYTNRFAYGGLQFKNNLFVTYGSYSFLAAGQCVEVHNFDILLNVSSLEICHALLPVIIPDDGDVRNFRNSSYVKFKDTQFNSIPELCSINFMKICNFMHQDFLLACGDNGIVYIWEINKVIKIFNKFTSDILGGKDNSRERYINVDPYMVLRVEESCWSVDVIDINGIIYIAVGHNKPGVTVFAFDKDVKKERRYIRPLDLPSSHNVPCVNFVPNSKDSVGYITLSYCSIFGNVVTVKLKEHDCTILTSFLDTQFFGDDLWTITPLTKKDFAKVDNFELLNLNYQDGFKESMLYSICRDDFLLGYYCDNAYLSGNFGIGTLLNQFQVPVTDLRLTSSAGIPDEVIPLRFTSFDRNYTTTGSIKYEYSREDFALILHAGDLDDMNDAVTKNTSCEQHLHQWTFWEDSGYKHYRATERGFSKYKDIINTFPQLITPSGRNKTSQYQNTSGRKICEPSTYKLTDLENDIEDISREFNRSIRNLKMDKQRQLRTSKEFKSLSSVNHIPNIESGNFLWYNTDAAADWRTLFGKDLNTVLKDPEICSLQLNSTEEDDVNSDPENEESGSSLTSFQRRYRDTEQRAHLKSESQKSWGFHNYVRNVKRLLESAVPGSEDSPLGYQLSEMHDEFFFLTTAHRLVLMKANPLIIISATHHEIFPLDGVVTCASKSLLQALNRINFVCHIKELNCIAVASQLGLISLLRLTEYRGIYSFRQEYILGWEVQDPVNPSPECRCNRNLFDAPMYGADGESSDTYCGVCDVYFPMGDICGLDYTYASDSEELKRKGYATLYVASRGSLRAFKITTEHGTTQQ.

The disordered stretch occupies residues 695 to 719; sequence NSTEEDDVNSDPENEESGSSLTSFQ. A compositionally biased stretch (acidic residues) spans 697–710; the sequence is TEEDDVNSDPENEE. At S704 the chain carries Phosphoserine.

In terms of assembly, component of a cullin-RING ligase (CRL) composed of 4 subunits: the RING protein HRT1, the cullin RTT101, a linker protein MMS1, and the substrate receptor CRT10. Interacts with MMS1.

Substrate targeting component of a cullin-RING-based E3 ubiquitin-protein ligase complex RTT101(MMS1-CRT10). RTT101(MMS1-CRT10) may regulate nucleotide synthesis through transcriptional regulation of RNR genes encoding ribonucleotide reductases. This is Protein CRT10 (CRT10) from Saccharomyces cerevisiae (strain ATCC 204508 / S288c) (Baker's yeast).